The chain runs to 379 residues: Citrate utilization protein B (379 aa).

8 residues coordinate [4Fe-4S] cluster: Cys28, Cys31, Cys34, Cys38, Cys62, Cys65, Cys68, and Cys72.

The chain is Citrate utilization protein B (citB) from Escherichia coli.